The following is a 252-amino-acid chain: Putative cytosolic acyl coenzyme A thioester hydrolase-like (252 aa).

HotDog ACOT-type domains are found at residues 1 to 90 (MIKE…LSLT) and 146 to 252 (SYSQ…SVFT).

Homodimer. As to expression, expressed in all tissues examined. Up-regulated in nasopharyngeal carcinoma (at protein level).

Its subcellular location is the cytoplasm. It carries out the reaction hexadecanoyl-CoA + H2O = hexadecanoate + CoA + H(+). Acyl-CoA thioesterases are a group of enzymes that catalyze the hydrolysis of acyl-CoAs to the free fatty acid and coenzyme A (CoASH), providing the potential to regulate intracellular levels of acyl-CoAs, free fatty acids and CoASH. The sequence is that of Putative cytosolic acyl coenzyme A thioester hydrolase-like (ACOT7L) from Homo sapiens (Human).